The following is a 229-amino-acid chain: MTTSLTWHDVLADEKQQPYFLNTLKTVAEERQSGITIYPPQKDVFNAFRFTELGDVKVVILGQDPYHGPGQAHGLAFSVRPGVAIPPSLLNMYKELEATIPGFTRPTHGYLESWARQGVLLLNTVLTVRAGQAHSHASLGWETFTDKVIALINEHCEGVVFLLWGSHAQKKGAIIDRQRHCVLKAPHPSPLSAHRGFFGSNHFVQTNQWLADRGEAPIDWMPVLPAESE.

Catalysis depends on D64, which acts as the Proton acceptor.

The protein belongs to the uracil-DNA glycosylase (UDG) superfamily. UNG family.

The protein localises to the cytoplasm. It carries out the reaction Hydrolyzes single-stranded DNA or mismatched double-stranded DNA and polynucleotides, releasing free uracil.. Excises uracil residues from the DNA which can arise as a result of misincorporation of dUMP residues by DNA polymerase or due to deamination of cytosine. The protein is Uracil-DNA glycosylase of Klebsiella pneumoniae (strain 342).